A 503-amino-acid chain; its full sequence is Zinc finger and BTB domain-containing protein 37 (503 aa).

Positions 32–96 constitute a BTB domain; the sequence is CDIVVNVQGQ…CYTGRICLQL (65 aa). Disordered stretches follow at residues 140–206 and 280–344; these read QTRT…SDVE and GHGS…QVEE. Basic and acidic residues predominate over residues 144–154; that stretch reads KHQERPPESHR. The segment covering 155–167 has biased composition (polar residues); that stretch reads VTPNLNRSLSPRH. The segment covering 319 to 336 has biased composition (basic and acidic residues); the sequence is TERHRARSESPGRMDEPK. 3 C2H2-type zinc fingers span residues 373 to 395, 401 to 423, and 429 to 452; these read LTCIYCAKSFNQKGSLDRHMRLH, FVCRMCGKKYTRKDQLEYHIRKH, and FHCHVCGKSFPFQAILNQHFRKNH. The disordered stretch occupies residues 457–503; sequence PLEGPHSISPETTVTSRGQAEEESPSQEETVAPGEAVQGSVSTTGPD. The span at 465-474 shows a compositional bias: polar residues; it reads SPETTVTSRG.

The protein localises to the nucleus. Functionally, may be involved in transcriptional regulation. In Homo sapiens (Human), this protein is Zinc finger and BTB domain-containing protein 37 (ZBTB37).